Here is a 201-residue protein sequence, read N- to C-terminus: Holliday junction resolvase RecU (201 aa).

Mg(2+)-binding residues include threonine 87, aspartate 89, glutamate 102, and glutamine 121.

This sequence belongs to the RecU family. Mg(2+) serves as cofactor.

Its subcellular location is the cytoplasm. The enzyme catalyses Endonucleolytic cleavage at a junction such as a reciprocal single-stranded crossover between two homologous DNA duplexes (Holliday junction).. Its function is as follows. Endonuclease that resolves Holliday junction intermediates in genetic recombination. Cleaves mobile four-strand junctions by introducing symmetrical nicks in paired strands. Promotes annealing of linear ssDNA with homologous dsDNA. Required for DNA repair, homologous recombination and chromosome segregation. This chain is Holliday junction resolvase RecU, found in Listeria monocytogenes serotype 4b (strain F2365).